Consider the following 243-residue polypeptide: Probable sentrin-specific protease 8 (243 aa).

A protease region spans residues 12–185 (SAIYQSDINI…LYVLSIIEEL (174 aa)). Catalysis depends on residues H109 and D126. C174 serves as the catalytic Nucleophile.

This sequence belongs to the peptidase C48 family.

Protease that catalyzes two essential functions in the nedd8 pathway: processing of full-length nedd8 to its mature form and deconjugation of nedd8 from targeted proteins. This is Probable sentrin-specific protease 8 (senp8) from Dictyostelium discoideum (Social amoeba).